Consider the following 651-residue polypeptide: Protein transport protein SEC9 (651 aa).

Disordered regions lie at residues 1–22, 53–299, and 313–332; these read MGLK…QNKD, AEDK…QAPM, and RNSE…DFEE. A phosphoserine mark is found at serine 79 and serine 92. Over residues 86–112 the composition is skewed to polar residues; it reads NEATAGSNRGSSGTQDLGNGAESNSMQ. Over residues 120-129 the composition is skewed to basic and acidic residues; sequence DDYRYDDDPY. Polar residues-rich tracts occupy residues 157-218 and 244-284; these read GTSL…SLDQ and DSNT…ANPY. Phosphoserine occurs at positions 186, 190, 213, 271, and 273. A compositionally biased stretch (low complexity) spans 285–296; that stretch reads SSRSVRQPQSQQ. The span at 313-327 shows a compositional bias: basic and acidic residues; the sequence is RNSEVDLNEEPRTGE. Serine 315 carries the phosphoserine modification. Threonine 355 carries the phosphothreonine modification. At serine 359 the chain carries Phosphoserine. 2 t-SNARE coiled-coil homology domains span residues 434–496 and 588–650; these read KFTK…VAEL and DEME…LAGI.

It belongs to the SNAP-25 family. In terms of assembly, interacts with SRO7 and SRO77.

Component of a SNARE complex that may be the effector of SEC4 function in exocytosis. The polypeptide is Protein transport protein SEC9 (SEC9) (Saccharomyces cerevisiae (strain ATCC 204508 / S288c) (Baker's yeast)).